A 388-amino-acid chain; its full sequence is Chorismate synthase (388 aa).

NADP(+)-binding residues include Arg39 and Arg45. FMN contacts are provided by residues 132–134, 251–252, Gly296, 311–315, and Arg337; these read RSS, NA, and KPIPT.

This sequence belongs to the chorismate synthase family. In terms of assembly, homotetramer. Requires FMNH2 as cofactor.

The catalysed reaction is 5-O-(1-carboxyvinyl)-3-phosphoshikimate = chorismate + phosphate. Its pathway is metabolic intermediate biosynthesis; chorismate biosynthesis; chorismate from D-erythrose 4-phosphate and phosphoenolpyruvate: step 7/7. Its function is as follows. Catalyzes the anti-1,4-elimination of the C-3 phosphate and the C-6 proR hydrogen from 5-enolpyruvylshikimate-3-phosphate (EPSP) to yield chorismate, which is the branch point compound that serves as the starting substrate for the three terminal pathways of aromatic amino acid biosynthesis. This reaction introduces a second double bond into the aromatic ring system. The polypeptide is Chorismate synthase (Staphylococcus carnosus (strain TM300)).